Reading from the N-terminus, the 396-residue chain is Succinyl-diaminopimelate desuccinylase (396 aa).

Histidine 74 serves as a coordination point for Zn(2+). Aspartate 76 is a catalytic residue. A Zn(2+)-binding site is contributed by aspartate 107. The active-site Proton acceptor is glutamate 142. 3 residues coordinate Zn(2+): glutamate 143, glutamate 171, and histidine 360.

The protein belongs to the peptidase M20A family. DapE subfamily. In terms of assembly, homodimer. Zn(2+) is required as a cofactor. Co(2+) serves as cofactor.

It catalyses the reaction N-succinyl-(2S,6S)-2,6-diaminopimelate + H2O = (2S,6S)-2,6-diaminopimelate + succinate. Its pathway is amino-acid biosynthesis; L-lysine biosynthesis via DAP pathway; LL-2,6-diaminopimelate from (S)-tetrahydrodipicolinate (succinylase route): step 3/3. In terms of biological role, catalyzes the hydrolysis of N-succinyl-L,L-diaminopimelic acid (SDAP), forming succinate and LL-2,6-diaminopimelate (DAP), an intermediate involved in the bacterial biosynthesis of lysine and meso-diaminopimelic acid, an essential component of bacterial cell walls. The chain is Succinyl-diaminopimelate desuccinylase from Methylobacterium nodulans (strain LMG 21967 / CNCM I-2342 / ORS 2060).